A 398-amino-acid chain; its full sequence is MWLLLTMASLISVLGTTHGLFGKLHPGSPEVTMNISQMITYWGYPNEEYEVVTEDGYILEVNRIPYGKKNSGNTGQRPVVFLQHGLLASATNWISNLPNNSLAFILADAGYDVWLGNSRGNTWARRNLYYSPDSVEFWAFSFDEMAKYDLPATIDFIVKKTGQKQLHYVGHSQGTTIGFIAFSTNPSLAKRIKTFYALAPVATVKYTKSLINKLRFVPQSLFKFIFGDKIFYPHNFFDQFLATEVCSREMLNLLCSNALFIICGFDSKNFNTSRLDVYLSHNPAGTSVQNMFHWTQAVKSGKFQAYDWGSPVQNRMHYDQSQPPYYNVTAMNVPIAVWNGGKDLLADPQDVGLLLPKLPNLIYHKEIPFYNHLDFIWAMDAPQEVYNDIVSMISEDKK.

The signal sequence occupies residues 1–19 (MWLLLTMASLISVLGTTHG). Residues asparagine 34 and asparagine 99 are each glycosylated (N-linked (GlcNAc...) asparagine). The region spanning 78 to 377 (PVVFLQHGLL…PFYNHLDFIW (300 aa)) is the AB hydrolase-1 domain. Serine 172 (nucleophile) is an active-site residue. Cysteine 246 and cysteine 255 are joined by a disulfide. N-linked (GlcNAc...) asparagine glycosylation is found at asparagine 271 and asparagine 327. Active-site charge relay system residues include aspartate 343 and histidine 372.

Belongs to the AB hydrolase superfamily. Lipase family.

Its subcellular location is the secreted. The catalysed reaction is a triacylglycerol + H2O = a diacylglycerol + a fatty acid + H(+). It carries out the reaction 1,2,3-tri-(9Z-octadecenoyl)-glycerol + H2O = 1,2-di-(9Z-octadecenoyl)-sn-glycerol + (9Z)-octadecenoate + H(+). The enzyme catalyses 1,2,3-trioctanoylglycerol + H2O = 1,2-dioctanoyl-sn-glycerol + octanoate + H(+). In terms of biological role, catalyzes the hydrolysis of triacylglycerols to yield free fatty acids, diacylglycerol, monoacylglycerol, and glycerol. Shows a preferential hydrolysis at the sn-3 position of triacylglycerol. In Homo sapiens (Human), this protein is Gastric triacylglycerol lipase (LIPF).